We begin with the raw amino-acid sequence, 377 residues long: Succinyl-diaminopimelate desuccinylase (377 aa).

His-67 is a binding site for Zn(2+). Residue Asp-69 is part of the active site. Asp-100 contacts Zn(2+). Catalysis depends on Glu-134, which acts as the Proton acceptor. Positions 135, 163, and 349 each coordinate Zn(2+).

This sequence belongs to the peptidase M20A family. DapE subfamily. In terms of assembly, homodimer. It depends on Zn(2+) as a cofactor. Co(2+) is required as a cofactor.

It carries out the reaction N-succinyl-(2S,6S)-2,6-diaminopimelate + H2O = (2S,6S)-2,6-diaminopimelate + succinate. The protein operates within amino-acid biosynthesis; L-lysine biosynthesis via DAP pathway; LL-2,6-diaminopimelate from (S)-tetrahydrodipicolinate (succinylase route): step 3/3. In terms of biological role, catalyzes the hydrolysis of N-succinyl-L,L-diaminopimelic acid (SDAP), forming succinate and LL-2,6-diaminopimelate (DAP), an intermediate involved in the bacterial biosynthesis of lysine and meso-diaminopimelic acid, an essential component of bacterial cell walls. This Haemophilus influenzae (strain PittGG) protein is Succinyl-diaminopimelate desuccinylase.